A 384-amino-acid chain; its full sequence is Beta-ureidopropionase (384 aa).

Residues 72–344 (VHVGLVQNRI…DGLLVAKLDL (273 aa)) enclose the CN hydrolase domain. The Proton acceptor role is filled by Glu-119. Lys-196 serves as the catalytic Proton donor. The Nucleophile role is filled by Cys-233. Residue Ser-378 is modified to Phosphoserine.

This sequence belongs to the carbon-nitrogen hydrolase superfamily. BUP family. In terms of assembly, homodimer, homotetramer, homooctamer; can also form higher homooligomers.

The protein localises to the cytoplasm. It carries out the reaction 3-(carbamoylamino)propanoate + H2O + 2 H(+) = beta-alanine + NH4(+) + CO2. The enzyme catalyses 3-(carbamoylamino)-2-methylpropanoate + H2O + 2 H(+) = (R)-3-amino-2-methylpropanoate + NH4(+) + CO2. The protein operates within amino-acid biosynthesis; beta-alanine biosynthesis. Catalyzes a late step in pyrimidine degradation. Converts N-carbamoyl-beta-alanine (3-ureidopropanoate) into beta-alanine, ammonia and carbon dioxide. Likewise, converts N-carbamoyl-beta-aminoisobutyrate (3-ureidoisobutyrate) into beta-aminoisobutyrate, ammonia and carbon dioxide. This Pongo abelii (Sumatran orangutan) protein is Beta-ureidopropionase (UPB1).